Consider the following 322-residue polypeptide: GTP 3',8-cyclase (322 aa).

In terms of domain architecture, Radical SAM core spans 5–233; it reads KYGRVVDYLR…NAPASIYRLD (229 aa). Arg14 is a binding site for GTP. Positions 21 and 25 each coordinate [4Fe-4S] cluster. Residue Tyr27 coordinates S-adenosyl-L-methionine. Cys28 lines the [4Fe-4S] cluster pocket. Arg64 serves as a coordination point for GTP. Gly68 provides a ligand contact to S-adenosyl-L-methionine. Thr95 is a GTP binding site. Ser119 is a binding site for S-adenosyl-L-methionine. GTP is bound at residue Lys155. Met189 serves as a coordination point for S-adenosyl-L-methionine. Positions 249 and 252 each coordinate [4Fe-4S] cluster. 254-256 is a GTP binding site; that stretch reads RIR. Cys266 contributes to the [4Fe-4S] cluster binding site.

The protein belongs to the radical SAM superfamily. MoaA family. Monomer and homodimer. [4Fe-4S] cluster is required as a cofactor.

It catalyses the reaction GTP + AH2 + S-adenosyl-L-methionine = (8S)-3',8-cyclo-7,8-dihydroguanosine 5'-triphosphate + 5'-deoxyadenosine + L-methionine + A + H(+). Its pathway is cofactor biosynthesis; molybdopterin biosynthesis. In terms of biological role, catalyzes the cyclization of GTP to (8S)-3',8-cyclo-7,8-dihydroguanosine 5'-triphosphate. The protein is GTP 3',8-cyclase of Campylobacter curvus (strain 525.92).